A 200-amino-acid chain; its full sequence is Putative manganese exporter (200 aa).

A run of 6 helical transmembrane segments spans residues 13-33, 53-73, 81-101, 110-130, 150-170, and 180-200; these read TEHV…AEIG, IIAA…WLGV, PDIL…WILI, SIST…AEIG, WVIV…VLIG, and GLIR…TAFF.

Belongs to the GDT1 family.

The protein localises to the cell inner membrane. Functionally, involved in manganese homeostasis. May function as a manganese exporter. In Vibrio cholerae serotype O1 (strain ATCC 39541 / Classical Ogawa 395 / O395), this protein is Putative manganese exporter.